Reading from the N-terminus, the 248-residue chain is Probable transcriptional regulatory protein BARBAKC583_0163 (248 aa).

This sequence belongs to the TACO1 family.

The protein resides in the cytoplasm. The sequence is that of Probable transcriptional regulatory protein BARBAKC583_0163 from Bartonella bacilliformis (strain ATCC 35685 / KC583 / Herrer 020/F12,63).